The following is a 428-amino-acid chain: D-alanine--D-alanine ligase (428 aa).

The 220-residue stretch at Lys-205–Glu-424 folds into the ATP-grasp domain. Position 237–299 (Asp-237–Glu-299) interacts with ATP. Mg(2+) is bound by residues Asp-378, Glu-391, and Asn-393.

This sequence belongs to the D-alanine--D-alanine ligase family. Mg(2+) is required as a cofactor. It depends on Mn(2+) as a cofactor.

It is found in the cytoplasm. It carries out the reaction 2 D-alanine + ATP = D-alanyl-D-alanine + ADP + phosphate + H(+). The protein operates within cell wall biogenesis; peptidoglycan biosynthesis. Functionally, cell wall formation. This Bifidobacterium longum (strain NCC 2705) protein is D-alanine--D-alanine ligase.